A 482-amino-acid polypeptide reads, in one-letter code: UDP-N-acetylmuramoyl-L-alanyl-D-glutamate--2,6-diaminopimelate ligase (482 aa).

Positions 28 and 30 each coordinate UDP-N-acetyl-alpha-D-muramoyl-L-alanyl-D-glutamate. 108-114 is an ATP binding site; sequence GTNGKTT. Residues 150–151, Ser-177, Gln-183, and Arg-185 each bind UDP-N-acetyl-alpha-D-muramoyl-L-alanyl-D-glutamate; that span reads TT. Lys-217 is modified (N6-carboxylysine). Meso-2,6-diaminopimelate is bound by residues Arg-372, 396-399, Gly-447, and Glu-451; that span reads DNPR. The Meso-diaminopimelate recognition motif signature appears at 396 to 399; sequence DNPR.

The protein belongs to the MurCDEF family. MurE subfamily. Requires Mg(2+) as cofactor. In terms of processing, carboxylation is probably crucial for Mg(2+) binding and, consequently, for the gamma-phosphate positioning of ATP.

The protein resides in the cytoplasm. It carries out the reaction UDP-N-acetyl-alpha-D-muramoyl-L-alanyl-D-glutamate + meso-2,6-diaminopimelate + ATP = UDP-N-acetyl-alpha-D-muramoyl-L-alanyl-gamma-D-glutamyl-meso-2,6-diaminopimelate + ADP + phosphate + H(+). Its pathway is cell wall biogenesis; peptidoglycan biosynthesis. In terms of biological role, catalyzes the addition of meso-diaminopimelic acid to the nucleotide precursor UDP-N-acetylmuramoyl-L-alanyl-D-glutamate (UMAG) in the biosynthesis of bacterial cell-wall peptidoglycan. In Aquifex aeolicus (strain VF5), this protein is UDP-N-acetylmuramoyl-L-alanyl-D-glutamate--2,6-diaminopimelate ligase.